The sequence spans 548 residues: Membrane protein insertase YidC (548 aa).

The helical transmembrane segment at 6-26 (NLLVIALLFVSFMIWQAWEQD) threads the bilayer. A disordered region spans residues 28–58 (NPQPQQQQTTQTTTTAAGSAADQGVPASGQG). A compositionally biased stretch (low complexity) spans 29 to 42 (PQPQQQQTTQTTTT). The next 4 helical transmembrane spans lie at 350-370 (FLGN…GIMY), 420-440 (LGGC…YYML), 458-478 (LSAQ…MFFI), and 499-519 (PVIF…YYIV).

This sequence belongs to the OXA1/ALB3/YidC family. Type 1 subfamily. As to quaternary structure, interacts with the Sec translocase complex via SecD. Specifically interacts with transmembrane segments of nascent integral membrane proteins during membrane integration.

The protein localises to the cell inner membrane. Required for the insertion and/or proper folding and/or complex formation of integral membrane proteins into the membrane. Involved in integration of membrane proteins that insert both dependently and independently of the Sec translocase complex, as well as at least some lipoproteins. Aids folding of multispanning membrane proteins. This Enterobacter sp. (strain 638) protein is Membrane protein insertase YidC.